An 87-amino-acid polypeptide reads, in one-letter code: UPF0248 protein TSIB_1445 (87 aa).

Belongs to the UPF0248 family.

The protein is UPF0248 protein TSIB_1445 of Thermococcus sibiricus (strain DSM 12597 / MM 739).